The chain runs to 274 residues: Penicillin-insensitive murein endopeptidase (274 aa).

The first 19 residues, 1 to 19 (MNKTAIALLALLASSASLA), serve as a signal peptide directing secretion. Cystine bridges form between Cys-44/Cys-265, Cys-187/Cys-235, and Cys-216/Cys-223. Positions 110, 113, 120, 147, 150, and 211 each coordinate Zn(2+). The tract at residues 227-274 (PLPPPGDGCGAELQSWFEPPKPGTTKPEKKTPPPLPPSCQALLDEHVI) is disordered.

This sequence belongs to the peptidase M74 family. Dimer. The cofactor is Zn(2+).

It localises to the periplasm. Its function is as follows. Murein endopeptidase that cleaves the D-alanyl-meso-2,6-diamino-pimelyl amide bond that connects peptidoglycan strands. Likely plays a role in the removal of murein from the sacculus. In Escherichia coli O1:K1 / APEC, this protein is Penicillin-insensitive murein endopeptidase.